Reading from the N-terminus, the 213-residue chain is Large ribosomal subunit protein uL4 (213 aa).

The tract at residues 41–75 (GTASTKTRAEVSRSGKKMYSQKGTGNARHGDRSVP) is disordered.

It belongs to the universal ribosomal protein uL4 family. Part of the 50S ribosomal subunit.

One of the primary rRNA binding proteins, this protein initially binds near the 5'-end of the 23S rRNA. It is important during the early stages of 50S assembly. It makes multiple contacts with different domains of the 23S rRNA in the assembled 50S subunit and ribosome. Its function is as follows. Forms part of the polypeptide exit tunnel. This Deinococcus geothermalis (strain DSM 11300 / CIP 105573 / AG-3a) protein is Large ribosomal subunit protein uL4.